The sequence spans 565 residues: Dihydroxy-acid dehydratase (565 aa).

Asp80 contributes to the Mg(2+) binding site. Residue Cys121 coordinates [2Fe-2S] cluster. Mg(2+) contacts are provided by Asp122 and Lys123. Lys123 is modified (N6-carboxylysine). Residue Cys194 coordinates [2Fe-2S] cluster. Glu447 contributes to the Mg(2+) binding site. Ser473 functions as the Proton acceptor in the catalytic mechanism.

The protein belongs to the IlvD/Edd family. As to quaternary structure, homodimer. The cofactor is [2Fe-2S] cluster. Requires Mg(2+) as cofactor.

It carries out the reaction (2R)-2,3-dihydroxy-3-methylbutanoate = 3-methyl-2-oxobutanoate + H2O. The enzyme catalyses (2R,3R)-2,3-dihydroxy-3-methylpentanoate = (S)-3-methyl-2-oxopentanoate + H2O. The protein operates within amino-acid biosynthesis; L-isoleucine biosynthesis; L-isoleucine from 2-oxobutanoate: step 3/4. Its pathway is amino-acid biosynthesis; L-valine biosynthesis; L-valine from pyruvate: step 3/4. Functions in the biosynthesis of branched-chain amino acids. Catalyzes the dehydration of (2R,3R)-2,3-dihydroxy-3-methylpentanoate (2,3-dihydroxy-3-methylvalerate) into 2-oxo-3-methylpentanoate (2-oxo-3-methylvalerate) and of (2R)-2,3-dihydroxy-3-methylbutanoate (2,3-dihydroxyisovalerate) into 2-oxo-3-methylbutanoate (2-oxoisovalerate), the penultimate precursor to L-isoleucine and L-valine, respectively. The chain is Dihydroxy-acid dehydratase from Pelodictyon phaeoclathratiforme (strain DSM 5477 / BU-1).